The following is a 92-amino-acid chain: Small ribosomal subunit protein uS19c (92 aa).

It belongs to the universal ribosomal protein uS19 family.

It is found in the plastid. Its subcellular location is the chloroplast. Its function is as follows. Protein S19 forms a complex with S13 that binds strongly to the 16S ribosomal RNA. The polypeptide is Small ribosomal subunit protein uS19c (Vitis vinifera (Grape)).